Here is a 262-residue protein sequence, read N- to C-terminus: Acyl-[acyl-carrier-protein]--UDP-N-acetylglucosamine O-acyltransferase (262 aa).

Belongs to the transferase hexapeptide repeat family. LpxA subfamily. In terms of assembly, homotrimer.

It is found in the cytoplasm. The catalysed reaction is a (3R)-hydroxyacyl-[ACP] + UDP-N-acetyl-alpha-D-glucosamine = a UDP-3-O-[(3R)-3-hydroxyacyl]-N-acetyl-alpha-D-glucosamine + holo-[ACP]. It participates in glycolipid biosynthesis; lipid IV(A) biosynthesis; lipid IV(A) from (3R)-3-hydroxytetradecanoyl-[acyl-carrier-protein] and UDP-N-acetyl-alpha-D-glucosamine: step 1/6. Involved in the biosynthesis of lipid A, a phosphorylated glycolipid that anchors the lipopolysaccharide to the outer membrane of the cell. The chain is Acyl-[acyl-carrier-protein]--UDP-N-acetylglucosamine O-acyltransferase from Burkholderia lata (strain ATCC 17760 / DSM 23089 / LMG 22485 / NCIMB 9086 / R18194 / 383).